A 508-amino-acid chain; its full sequence is Ribonuclease Y (508 aa).

A helical membrane pass occupies residues 1–21 (MMLWYIVAGAGGLLIGYLIAN). Residues 198 to 283 (TVSTVSLPSD…EMYEKAKQEV (86 aa)) enclose the KH domain. In terms of domain architecture, HD spans 324–417 (VLNHSIEVAL…VAAADALSAA (94 aa)).

The protein belongs to the RNase Y family.

It is found in the cell membrane. In terms of biological role, endoribonuclease that initiates mRNA decay. This Thermotoga maritima (strain ATCC 43589 / DSM 3109 / JCM 10099 / NBRC 100826 / MSB8) protein is Ribonuclease Y.